The chain runs to 82 residues: Vejovine (82 aa).

The N-terminal stretch at Met1–Ala22 is a signal peptide. A propeptide spanning residues Met70–Asp82 is cleaved from the precursor.

The protein belongs to the non-disulfide-bridged peptide (NDBP) superfamily. Long chain multifunctional peptide (group 2) family. As to expression, expressed by the venom gland.

Its subcellular location is the secreted. It is found in the target cell membrane. Functionally, displays significant potent antimicrobial activity against clinical isolates of Gram-negative multidrug resistant strains of E.coli, P.aeruginosa and A.baumanii with MIC values as low as 4.4 uM. Additionally, it displays low cytolytic and hemolytic activity against human erythrocytes reaching 50% hemolysis at 100 uM. The sequence is that of Vejovine from Vaejovis mexicanus (Mexican scorpion).